The primary structure comprises 259 residues: UPF0246 protein PFLU_0992 (259 aa).

The protein belongs to the UPF0246 family.

This is UPF0246 protein PFLU_0992 from Pseudomonas fluorescens (strain SBW25).